A 610-amino-acid polypeptide reads, in one-letter code: Zinc metalloproteinase-disintegrin-like bothropasin (610 aa).

Positions 1 to 20 (MIEVLLVTICLAAFPYQGSS) are cleaved as a signal peptide. A propeptide spanning residues 21-191 (IILESGNVND…ASQLVVTAEQ (171 aa)) is cleaved from the precursor. Glutamine 192 is subject to Pyrrolidone carboxylic acid. The Peptidase M12B domain maps to 198–394 (RYVELFIVVD…ENPQCILNEP (197 aa)). Positions 201 and 285 each coordinate Ca(2+). Disulfide bonds link cysteine 309/cysteine 389, cysteine 349/cysteine 373, and cysteine 351/cysteine 356. Position 334 (histidine 334) interacts with Zn(2+). Glutamate 335 is an active-site residue. Zn(2+)-binding residues include histidine 338 and histidine 344. An N-linked (GlcNAc...) asparagine glycan is attached at asparagine 372. Ca(2+)-binding residues include cysteine 389, asparagine 392, valine 404, asparagine 407, leucine 409, glutamate 411, glutamate 414, and aspartate 417. The Disintegrin domain occupies 402–488 (PPVCGNELLE…ECPADVFHKN (87 aa)). Intrachain disulfides connect cysteine 405–cysteine 424, cysteine 405–cysteine 434, cysteine 416–cysteine 429, cysteine 416–cysteine 434, cysteine 418–cysteine 424, cysteine 428–cysteine 451, cysteine 442–cysteine 448, cysteine 447–cysteine 473, cysteine 460–cysteine 480, cysteine 467–cysteine 492, cysteine 467–cysteine 499, cysteine 492–cysteine 504, cysteine 499–cysteine 504, cysteine 511–cysteine 526, cysteine 511–cysteine 561, cysteine 526–cysteine 572, cysteine 539–cysteine 549, cysteine 549–cysteine 556, cysteine 556–cysteine 598, cysteine 561–cysteine 572, cysteine 592–cysteine 603, and cysteine 598–cysteine 603. The D/ECD-tripeptide motif lies at 466–468 (ECD). Ca(2+)-binding residues include aspartate 468, proline 469, glutamate 471, aspartate 483, and valine 484.

The protein belongs to the venom metalloproteinase (M12B) family. P-III subfamily. P-IIIb sub-subfamily. In terms of assembly, monomer. Requires Zn(2+) as cofactor. In terms of tissue distribution, expressed by the venom gland.

Its subcellular location is the secreted. The enzyme catalyses Cleavage of 5-His-|-Leu-6, 10-His-|-Leu-11, 14-Ala-|-Leu-15, 16-Tyr-|-Leu-17 and 24-Phe-|-Phe-25 in insulin B chain.. With respect to regulation, inhibited by EDTA and EGTA. Has caseinolytic activity. Causes hemorrhage on rabbit skin and causes myonecrosis in mouse tibialis anterior muscle. Functionally, inhibits platelet aggregation. The protein is Zinc metalloproteinase-disintegrin-like bothropasin of Bothrops jararaca (Jararaca).